Consider the following 719-residue polypeptide: MKEQDNLSISQELYGTILINLKSIVQNIFPLEYNKQEITISYIVEQIASSGSIQKNSDYPELDEEIEEINQAIIDYCKYKEIPKEEENNIYKKTSELIKDGFLKNIEQTTKLEPTTELEKKYLDKLNQATSSDEKKIIIDQHKLEIEAFNKQIAQDFQKKQEDLRGNREITNVEEHKLVKEGIVTKEEIEPYLSNYPLLNTLVEYIYLDDDQDIPLVKKLFEIARNFYPNNSTQELKELMELSYKKVNDLVGTNSSNILELLNHKQISFADINNVESEELHKINEIKIKSNFKILDCVISGDCRVTLKKLIETGKIESFDKKELELVVALFEKDADTLNKHQETKLSSKVGKLLLTFHASKAYKLDDLMQFINIIDVAEELLFTATYYQNINIIKQIIETKIEISSSTLIKALYINFTSDNKEILDYLLSFKGLNINEHDENGGTLLDYAITFNKLDIVKKLLSHENIEVNKKNIYGFTILEQAINDDKLEIVKLLLSCKSLEINQKNQYQTTPLQQAINGDKLEIVKLLLSHPDIKFNEKDQLGYTSLDWVIICNKLEIFKVLMPHLDINQKNQDGYTPLEWSIYNSYEVFQTLLLRPDINVNEENQHGLTPLQLAIIDHNDQMIQALLSHKNIEVSEKNQYGTPLELVINNSNDTALKLLLSHPKINLNKTEIAEILRLHEAKLKEEVQDDSVPISNIELDTSVLGGLEEDQESYGL.

ANK repeat units follow at residues 377-406 (VAEE…EISS), 408-438 (TLIK…NINE), 442-472 (NGGT…EVNK), 476-506 (YGFT…EINQ), 510-540 (YQTT…KFNE), 544-572 (LGYT…DINQ), 576-605 (DGYT…NVNE), 609-639 (HGLT…EVSE), and 642-672 (QYGT…NLNK).

This is Putative ankyrin repeat protein RBE_0319 from Rickettsia bellii (strain RML369-C).